A 445-amino-acid chain; its full sequence is Phosphoglucosamine mutase (445 aa).

The active-site Phosphoserine intermediate is the Ser101. Mg(2+) is bound by residues Ser101, Asp240, Asp242, and Asp244. The residue at position 101 (Ser101) is a Phosphoserine.

Belongs to the phosphohexose mutase family. It depends on Mg(2+) as a cofactor. Post-translationally, activated by phosphorylation.

It carries out the reaction alpha-D-glucosamine 1-phosphate = D-glucosamine 6-phosphate. Catalyzes the conversion of glucosamine-6-phosphate to glucosamine-1-phosphate. This is Phosphoglucosamine mutase from Pseudomonas aeruginosa (strain LESB58).